We begin with the raw amino-acid sequence, 703 residues long: Protein teflon (703 aa).

A C2H2-type 1 zinc finger spans residues 32–55; that stretch reads MLCHFCKDIFTHLPEFMRHLQWSH. Disordered stretches follow at residues 78-111, 140-161, 205-239, and 339-434; these read SSED…PGSS, EQSY…ARKP, NDVS…MPSL, and SQQP…SKLE. Polar residues predominate over residues 84 to 94; sequence QSQANSCSSGD. Over residues 148-161 the composition is skewed to basic and acidic residues; sequence PDSRTEGFRCARKP. Polar residues-rich tracts occupy residues 339 to 352 and 364 to 373; these read SQQP…NNAV and SLTVISSSPI. 2 consecutive C2H2-type zinc fingers follow at residues 649-672 and 677-700; these read YFCE…QSVH and FTCS…KTVH.

Belongs to the Teflon family.

The protein localises to the nucleus. It localises to the chromosome. Specifically required in males for proper segregation of autosomal bivalents at meiosis I. Expression is required in the male germ line prior to spermatocyte stage S4. May have a role as a bridging molecule maintaining adhesion to hold autosome bivalents together via heterochromatic connections. This chain is Protein teflon, found in Drosophila persimilis (Fruit fly).